The primary structure comprises 223 residues: Sigma non-opioid intracellular receptor 1 (223 aa).

Residues 1-9 (MQWALGRRW) are Lumenal-facing. The interval 2–8 (QWALGRR) is targeting to endoplasmic reticulum-associated lipid droplets. Residues 10 to 30 (VWAALLLAAAAVLTQVVWLWL) form a helical membrane-spanning segment. Over 31–223 (GTQSFVFQHE…FTTYLFGQDS (193 aa)) the chain is Cytoplasmic. The tract at residues 99-106 (SLSEYVLL) is important for ligand-binding. The tract at residues 177-223 (VIPSTLAFALADTIFSTQDFLTLFYTLRAYARGLRLEFTTYLFGQDS) is C-terminal hydrophobic region.

Belongs to the ERG2 family. As to quaternary structure, homotrimer. Forms a ternary complex with ANK2 and ITPR3. The complex is disrupted by agonists. Interacts with KCNA4. Interacts with KCNA2; cocaine consumption leads to increased interaction. Interacts with RNF112 in an oxidative stress-regulated manner.

It localises to the nucleus inner membrane. The protein resides in the nucleus outer membrane. It is found in the nucleus envelope. Its subcellular location is the cytoplasmic vesicle. The protein localises to the endoplasmic reticulum membrane. It localises to the membrane. The protein resides in the lipid droplet. It is found in the cell junction. Its subcellular location is the cell membrane. The protein localises to the cell projection. It localises to the growth cone. The protein resides in the postsynaptic density membrane. Functions in lipid transport from the endoplasmic reticulum and is involved in a wide array of cellular functions probably through regulation of the biogenesis of lipid microdomains at the plasma membrane. Involved in the regulation of different receptors it plays a role in BDNF signaling and EGF signaling. Also regulates ion channels like the potassium channel and could modulate neurotransmitter release. Plays a role in calcium signaling through modulation together with ANK2 of the ITP3R-dependent calcium efflux at the endoplasmic reticulum. Plays a role in several other cell functions including proliferation, survival and death. Originally identified for its ability to bind various psychoactive drugs it is involved in learning processes, memory and mood alteration. Necessary for proper mitochondrial axonal transport in motor neurons, in particular the retrograde movement of mitochondria. Plays a role in protecting cells against oxidative stress-induced cell death via its interaction with RNF112. The sequence is that of Sigma non-opioid intracellular receptor 1 (SIGMAR1) from Mustela erminea (Ermine).